Consider the following 101-residue polypeptide: Small ribosomal subunit protein uS10 (101 aa).

This sequence belongs to the universal ribosomal protein uS10 family. Part of the 30S ribosomal subunit.

Functionally, involved in the binding of tRNA to the ribosomes. This Flavobacterium johnsoniae (strain ATCC 17061 / DSM 2064 / JCM 8514 / BCRC 14874 / CCUG 350202 / NBRC 14942 / NCIMB 11054 / UW101) (Cytophaga johnsonae) protein is Small ribosomal subunit protein uS10.